The following is a 940-amino-acid chain: Isoleucine--tRNA ligase (940 aa).

Residues 58-68 (PYANGSIHIGH) carry the 'HIGH' region motif. Residue Glu-564 coordinates L-isoleucyl-5'-AMP. The 'KMSKS' region signature appears at 605–609 (KMSKS). Lys-608 is a binding site for ATP. Zn(2+) is bound by residues Cys-903, Cys-906, Cys-923, and Cys-926.

The protein belongs to the class-I aminoacyl-tRNA synthetase family. IleS type 1 subfamily. Monomer. It depends on Zn(2+) as a cofactor.

It localises to the cytoplasm. The catalysed reaction is tRNA(Ile) + L-isoleucine + ATP = L-isoleucyl-tRNA(Ile) + AMP + diphosphate. Functionally, catalyzes the attachment of isoleucine to tRNA(Ile). As IleRS can inadvertently accommodate and process structurally similar amino acids such as valine, to avoid such errors it has two additional distinct tRNA(Ile)-dependent editing activities. One activity is designated as 'pretransfer' editing and involves the hydrolysis of activated Val-AMP. The other activity is designated 'posttransfer' editing and involves deacylation of mischarged Val-tRNA(Ile). This Shewanella sp. (strain ANA-3) protein is Isoleucine--tRNA ligase.